Here is a 250-residue protein sequence, read N- to C-terminus: Small ribosomal subunit protein uS2 (250 aa).

The protein belongs to the universal ribosomal protein uS2 family.

The sequence is that of Small ribosomal subunit protein uS2 from Albidiferax ferrireducens (strain ATCC BAA-621 / DSM 15236 / T118) (Rhodoferax ferrireducens).